Here is a 434-residue protein sequence, read N- to C-terminus: Cysteine--tRNA ligase (434 aa).

C28 is a binding site for Zn(2+). The 'HIGH' region signature appears at 30–40 (PTVYDDIHIGN). Residues C207, H232, and E236 each contribute to the Zn(2+) site. The 'KMSKS' region signature appears at 264-268 (KMSKS). Residue K267 participates in ATP binding.

It belongs to the class-I aminoacyl-tRNA synthetase family. Monomer. Zn(2+) is required as a cofactor.

It localises to the cytoplasm. The enzyme catalyses tRNA(Cys) + L-cysteine + ATP = L-cysteinyl-tRNA(Cys) + AMP + diphosphate. The protein is Cysteine--tRNA ligase of Acholeplasma laidlawii (strain PG-8A).